Consider the following 732-residue polypeptide: MQLIYQCAWIVPLCPLISSILIGLGLLFFEKSTKSIRRICAISCILSLSVATVICYNLSYEQIIDNSIYQYSWSWISNGDIVLEFGYLIDPLTCIMLVLVTSVAIIVMIYSDGYMSHDEGYVRFFVYLSLFTASMLGLVLSPNLIQIYIFWELVGMCSYLLIGFWFTRPSAANACQKAFITNRIGDFGLLLGILGFYWITGSFEFENLFKGFKDLLINNEVSPFFAILCASFLFLGPVAKSAQFPLHVWLPDAMEGPTPISALIHAATMVAAGIYLVARMFPLFETLPFVMSVISWTGAVTALLGATLAFFQKDLKRGLAYSTMSQLGYMMLALGIGSYRAGLFHLITHAYSKALLFLGSGSVIHSMEPIVGYRPDESQNMIFMGGLRKHMPITGTTFLLGTLSLCGIPPFACFWSKDEIIADSWLYSPFIGWIALLTAGLTSFYMFRIYFLTFEGEFRANSFKENTPVSSVSLWGEFRFEEFGEKKADSVLQIVEKSSPKEFFRFVQSNRESSETQIGNYLSAYPSKEPIHFLYPKESDYTMLIPLLILSIPTLLIGFIGAPLPNGQLGSDLLSHWLNSFGNLSPERLSENWLEFIEDAITSISIASFGIFSAFILYGPASIFPRDLEKKIEPQLKGVWGFFINYMYNWSQYRGYIDQYYNKIFVEGTRILAYASSFFDRWIIDGIVNGTGISSFSGGEGMRYGEGGRVSSYLFGLVFGMTILLAVILLII.

The next 16 membrane-spanning stretches (helical) occupy residues 9–29 (WIVP…LLFF), 39–59 (ICAI…YNLS), 89–109 (IDPL…IVMI), 125–145 (FVYL…PNLI), 147–167 (IYIF…FWFT), 184–204 (IGDF…GSFE), 215–235 (LLIN…FLFL), 258–278 (TPIS…YLVA), 291–311 (MSVI…LAFF), 327–347 (LGYM…FHLI), 353–373 (KALL…IVGY), 395–415 (GTTF…ACFW), 420–440 (IIAD…LTAG), 544–564 (LIPL…GAPL), 604–624 (ISIA…ASIF), and 712–732 (SYLF…LLII).

It belongs to the complex I subunit 5 family. In terms of assembly, NDH is composed of at least 16 different subunits, 5 of which are encoded in the nucleus.

The protein localises to the plastid. The protein resides in the chloroplast thylakoid membrane. The enzyme catalyses a plastoquinone + NADH + (n+1) H(+)(in) = a plastoquinol + NAD(+) + n H(+)(out). The catalysed reaction is a plastoquinone + NADPH + (n+1) H(+)(in) = a plastoquinol + NADP(+) + n H(+)(out). In terms of biological role, NDH shuttles electrons from NAD(P)H:plastoquinone, via FMN and iron-sulfur (Fe-S) centers, to quinones in the photosynthetic chain and possibly in a chloroplast respiratory chain. The immediate electron acceptor for the enzyme in this species is believed to be plastoquinone. Couples the redox reaction to proton translocation, and thus conserves the redox energy in a proton gradient. This chain is NAD(P)H-quinone oxidoreductase subunit 5, chloroplastic (ndhF), found in Anthoceros angustus (Hornwort).